The primary structure comprises 365 residues: PR domain zinc finger protein 12 (365 aa).

The 118-residue stretch at 86–203 (VEVIIAQSSI…PDQELLVWYG (118 aa)) folds into the SET domain. 3 consecutive C2H2-type zinc fingers follow at residues 243–265 (MRCV…MRIH), 271–293 (FVCR…VRLH), and 299–323 (YKCQ…SARH). Residues 318 to 338 (QKSARHRPPSTALQAHSPALP) form a disordered region. The span at 329-338 (ALQAHSPALP) shows a compositional bias: low complexity.

It belongs to the class V-like SAM-binding methyltransferase superfamily. In terms of assembly, interacts with EHMT2.

The protein localises to the nucleus. Functionally, transcriptional regulator necessary for the development of nociceptive neurons, playing a key role in determining the nociceptive lineage from neural crest cell progenitors. Initiates neurogenesis and activates downstream pro-neuronal transcription factors, such as NEUROD1, BRN3A, and ISL1, specifically within nociceptive neurons, while repressing non-nociceptor cell fates. Essential for the proper function of nociceptors in adults, influencing both their excitability and their gene expression, thereby impacting how these neurons respond to various pain stimuli. The protein is PR domain zinc finger protein 12 (Prdm12) of Mus musculus (Mouse).